A 309-amino-acid polypeptide reads, in one-letter code: Integral membrane protein sed5 (309 aa).

Topologically, residues Met-1–Arg-288 are cytoplasmic. The stretch at Lys-37–Gln-66 forms a coiled coil. Residues Asp-218 to Phe-280 form the t-SNARE coiled-coil homology domain. Residues Ala-289–Val-308 traverse the membrane as a helical; Anchor for type IV membrane protein segment. Residue Thr-309 is a topological domain, vesicular.

The protein belongs to the syntaxin family.

The protein resides in the membrane. It is found in the golgi apparatus membrane. Functionally, required for vesicular transport between the endoplasmic reticulum and the Golgi complex. Acts as a target organelle soluble NSF attachment protein receptor (t-SNARE). In Schizosaccharomyces pombe (strain 972 / ATCC 24843) (Fission yeast), this protein is Integral membrane protein sed5 (sed5).